The sequence spans 204 residues: Factor arrest protein 3 (204 aa).

In terms of assembly, component of a complex at least composed of FAR3, FAR7, FAR8, FAR10, FAR11 and VPS64.

The protein localises to the endoplasmic reticulum. Functionally, participates in the control of the reentry into the cell cycle following pheromone treatment. The polypeptide is Factor arrest protein 3 (FAR3) (Saccharomyces cerevisiae (strain ATCC 204508 / S288c) (Baker's yeast)).